Reading from the N-terminus, the 198-residue chain is Peptidyl-tRNA hydrolase (198 aa).

Tyr-18 contributes to the tRNA binding site. The active-site Proton acceptor is His-23. 3 residues coordinate tRNA: Tyr-69, Asn-71, and Asn-117.

Belongs to the PTH family. As to quaternary structure, monomer.

Its subcellular location is the cytoplasm. The catalysed reaction is an N-acyl-L-alpha-aminoacyl-tRNA + H2O = an N-acyl-L-amino acid + a tRNA + H(+). In terms of biological role, hydrolyzes ribosome-free peptidyl-tRNAs (with 1 or more amino acids incorporated), which drop off the ribosome during protein synthesis, or as a result of ribosome stalling. Its function is as follows. Catalyzes the release of premature peptidyl moieties from peptidyl-tRNA molecules trapped in stalled 50S ribosomal subunits, and thus maintains levels of free tRNAs and 50S ribosomes. In Aeromonas hydrophila subsp. hydrophila (strain ATCC 7966 / DSM 30187 / BCRC 13018 / CCUG 14551 / JCM 1027 / KCTC 2358 / NCIMB 9240 / NCTC 8049), this protein is Peptidyl-tRNA hydrolase.